We begin with the raw amino-acid sequence, 467 residues long: Cysteine--tRNA ligase (467 aa).

Position 27 (Cys27) interacts with Zn(2+). Positions 29 to 39 (ATVQGLPHIGH) match the 'HIGH' region motif. Residues Cys209, His234, and Glu238 each contribute to the Zn(2+) site. The 'KMSKS' region motif lies at 265 to 269 (KMSKS). ATP is bound at residue Lys268.

Belongs to the class-I aminoacyl-tRNA synthetase family. In terms of assembly, monomer. Requires Zn(2+) as cofactor.

The protein resides in the cytoplasm. The enzyme catalyses tRNA(Cys) + L-cysteine + ATP = L-cysteinyl-tRNA(Cys) + AMP + diphosphate. This chain is Cysteine--tRNA ligase, found in Mycolicibacterium gilvum (strain PYR-GCK) (Mycobacterium gilvum (strain PYR-GCK)).